A 244-amino-acid chain; its full sequence is Ribonuclease 3 (244 aa).

One can recognise an RNase III domain in the interval 7 to 134 (FEEVEKTLNI…IIAAIYIDSG (128 aa)). Glu-47 is a Mg(2+) binding site. Asp-51 is a catalytic residue. Mg(2+) is bound by residues Asn-120 and Glu-123. Residue Glu-123 is part of the active site. The 70-residue stretch at 161-230 (DYKTNLQEIV…AQDALKKLKS (70 aa)) folds into the DRBM domain.

It belongs to the ribonuclease III family. As to quaternary structure, homodimer. The cofactor is Mg(2+).

The protein localises to the cytoplasm. The enzyme catalyses Endonucleolytic cleavage to 5'-phosphomonoester.. Functionally, digests double-stranded RNA. Involved in the processing of primary rRNA transcript to yield the immediate precursors to the large and small rRNAs (23S and 16S). Processes some mRNAs, and tRNAs when they are encoded in the rRNA operon. Processes pre-crRNA and tracrRNA of type II CRISPR loci if present in the organism. The sequence is that of Ribonuclease 3 from Clostridium kluyveri (strain NBRC 12016).